A 225-amino-acid chain; its full sequence is Insulin-induced gene 2 protein (225 aa).

Topologically, residues Met1–Leu28 are cytoplasmic. A helical transmembrane segment spans residues Met29–Ile51. Residues Gln52–Ala70 lie on the Lumenal side of the membrane. A helical membrane pass occupies residues Trp71–Tyr88. The Cytoplasmic segment spans residues Pro89–Arg103. A helical transmembrane segment spans residues Glu104–Asp126. The Lumenal portion of the chain corresponds to Phe127–Asn129. A helical transmembrane segment spans residues Asn130 to Phe148. The Cytoplasmic segment spans residues Asp149–Ser153. Ser151 is modified (phosphoserine). A helical transmembrane segment spans residues Gly154 to Asn175. Topologically, residues Gly176–Arg189 are lumenal. The chain crosses the membrane as a helical span at residues Ser190–Gly207. Residues Arg208–Glu225 are Cytoplasmic-facing. Residue Cys215 is modified to Cysteine sulfenic acid (-SOH); alternate. Cys215 is covalently cross-linked (Glycyl cysteine thioester (Cys-Gly) (interchain with G-Cter in ubiquitin); alternate). The KxHxx signature appears at Ala219–Glu225.

Belongs to the INSIG family. In terms of assembly, interacts with SCAP; interaction is direct and only takes place in the presence of sterols; it prevents interaction between SCAP and the coat protein complex II (COPII). Associates with the SCAP-SREBP complex (composed of SCAP and SREBF1/SREBP1 or SREBF2/SREBP2); association is mediated via its interaction with SCAP and only takes place in the presence of sterols. Interacts with RNF139. Interacts with RNF145. Post-translationally, phosphorylation at Ser-151 by PCK1 reduces binding to oxysterol, disrupting the interaction between INSIG2 and SCAP, thereby promoting nuclear translocation of SREBP proteins (SREBF1/SREBP1 or SREBF2/SREBP2) and subsequent transcription of downstream lipogenesis-related genes. Polyubiquitinated by AMFR/gp78 at Cys-215 in some tissues such as adipose tissues, undifferentiated myoblasts and liver, leading to its degradation. In differentiated myotubes, Cys-215 oxidation prevents ubiquitination at the same site, resulting in protein stabilization. In terms of processing, oxidized at Cys-215 in differentiated myotubes, preventing ubiquitination at the same site, and resulting in protein stabilization.

The protein resides in the endoplasmic reticulum membrane. Oxysterol-binding protein that mediates feedback control of cholesterol synthesis by controlling both endoplasmic reticulum to Golgi transport of SCAP and degradation of HMGCR. Acts as a negative regulator of cholesterol biosynthesis by mediating the retention of the SCAP-SREBP complex in the endoplasmic reticulum, thereby blocking the processing of sterol regulatory element-binding proteins (SREBPs) SREBF1/SREBP1 and SREBF2/SREBP2. Binds oxysterol, including 22-hydroxycholesterol, 24-hydroxycholesterol, 25-hydroxycholesterol and 27-hydroxycholesterol, regulating interaction with SCAP and retention of the SCAP-SREBP complex in the endoplasmic reticulum. In presence of oxysterol, interacts with SCAP, retaining the SCAP-SREBP complex in the endoplasmic reticulum, thereby preventing SCAP from escorting SREBF1/SREBP1 and SREBF2/SREBP2 to the Golgi. Sterol deprivation or phosphorylation by PCK1 reduce oxysterol-binding, disrupting the interaction between INSIG2 and SCAP, thereby promoting Golgi transport of the SCAP-SREBP complex, followed by processing and nuclear translocation of SREBF1/SREBP1 and SREBF2/SREBP2. Also regulates cholesterol synthesis by regulating degradation of HMGCR: initiates the sterol-mediated ubiquitin-mediated endoplasmic reticulum-associated degradation (ERAD) of HMGCR via recruitment of the reductase to the ubiquitin ligase RNF139. The protein is Insulin-induced gene 2 protein of Sus scrofa (Pig).